Consider the following 270-residue polypeptide: Formamidopyrimidine-DNA glycosylase (270 aa).

The active-site Schiff-base intermediate with DNA is Pro2. Glu3 acts as the Proton donor in catalysis. Lys58 functions as the Proton donor; for beta-elimination activity in the catalytic mechanism. His91, Arg110, and Arg151 together coordinate DNA. The FPG-type zinc-finger motif lies at 236–270 (FVYGRGGEFCKVCGSTLREIRLGQRASVYCPRCQR). The active-site Proton donor; for delta-elimination activity is the Arg260.

It belongs to the FPG family. Monomer. Zn(2+) serves as cofactor.

The catalysed reaction is Hydrolysis of DNA containing ring-opened 7-methylguanine residues, releasing 2,6-diamino-4-hydroxy-5-(N-methyl)formamidopyrimidine.. It carries out the reaction 2'-deoxyribonucleotide-(2'-deoxyribose 5'-phosphate)-2'-deoxyribonucleotide-DNA = a 3'-end 2'-deoxyribonucleotide-(2,3-dehydro-2,3-deoxyribose 5'-phosphate)-DNA + a 5'-end 5'-phospho-2'-deoxyribonucleoside-DNA + H(+). In terms of biological role, involved in base excision repair of DNA damaged by oxidation or by mutagenic agents. Acts as a DNA glycosylase that recognizes and removes damaged bases. Has a preference for oxidized purines, such as 7,8-dihydro-8-oxoguanine (8-oxoG). Has AP (apurinic/apyrimidinic) lyase activity and introduces nicks in the DNA strand. Cleaves the DNA backbone by beta-delta elimination to generate a single-strand break at the site of the removed base with both 3'- and 5'-phosphates. This is Formamidopyrimidine-DNA glycosylase from Pseudomonas paraeruginosa (strain DSM 24068 / PA7) (Pseudomonas aeruginosa (strain PA7)).